The chain runs to 178 residues: 3-hydroxyacyl-[acyl-carrier-protein] dehydratase FabZ (178 aa).

Residue His54 is part of the active site.

Belongs to the thioester dehydratase family. FabZ subfamily.

Its subcellular location is the cytoplasm. It carries out the reaction a (3R)-hydroxyacyl-[ACP] = a (2E)-enoyl-[ACP] + H2O. Functionally, involved in unsaturated fatty acids biosynthesis. Catalyzes the dehydration of short chain beta-hydroxyacyl-ACPs and long chain saturated and unsaturated beta-hydroxyacyl-ACPs. The polypeptide is 3-hydroxyacyl-[acyl-carrier-protein] dehydratase FabZ (Yersinia enterocolitica).